A 63-amino-acid chain; its full sequence is MRFLLLLTVALLLTCIMETDAEAKPEDLAERFRERSDCSGMSDGTSCGDTGVCQNGLCMGAGS.

The first 21 residues, 1-21, serve as a signal peptide directing secretion; the sequence is MRFLLLLTVALLLTCIMETDA. Residues 22-34 constitute a propeptide that is removed on maturation; the sequence is EAKPEDLAERFRE.

Post-translationally, contains 2 disulfide bond. Expressed by the venom duct.

Its subcellular location is the secreted. This is Conotoxin Cl14.11 from Californiconus californicus (California cone).